The following is a 243-amino-acid chain: ADP-ribosylation factor-like protein 10 (243 aa).

GTP is bound by residues 83-90 (GLDGSGKS), 127-131 (EIGGS), and 184-187 (NKQD).

It belongs to the small GTPase superfamily. Arf family.

This chain is ADP-ribosylation factor-like protein 10 (Arl10), found in Mus musculus (Mouse).